The primary structure comprises 289 residues: ATP synthase subunit a (289 aa).

6 helical membrane passes run 43 to 63 (AFHLDTLGWSVALGLIFVLIF), 104 to 124 (IAPLALTIFVWVFLMNAVDLI), 160 to 180 (LSVFALIIFYSIKVKGIGGFI), 193 to 213 (IFVQALLIPVNFLLEFVTLIA), 232 to 252 (VFILIAVMFGSGLLWLSGLGV), and 259 to 279 (AVFHILIITLQAFIFMMLTIV).

The protein belongs to the ATPase A chain family. In terms of assembly, F-type ATPases have 2 components, CF(1) - the catalytic core - and CF(0) - the membrane proton channel. CF(1) has five subunits: alpha(3), beta(3), gamma(1), delta(1), epsilon(1). CF(0) has three main subunits: a(1), b(2) and c(9-12). The alpha and beta chains form an alternating ring which encloses part of the gamma chain. CF(1) is attached to CF(0) by a central stalk formed by the gamma and epsilon chains, while a peripheral stalk is formed by the delta and b chains.

Its subcellular location is the cell inner membrane. In terms of biological role, key component of the proton channel; it plays a direct role in the translocation of protons across the membrane. The polypeptide is ATP synthase subunit a (Pseudomonas fluorescens (strain SBW25)).